A 423-amino-acid chain; its full sequence is MASALEQFVNSVRQLSAQGQMTQLCELINKSGELLAKNLSHLDTVLGALDVQEHSLGVLAVLFVKFSMPSVPDFETLFSQVQLFISTCNGEHIRYATDTFAGLCHQLTNALVERKQPLRGIGILKQAIDKMQMNTNQLTSVHADLCQLCLLAKCFKPALPYLDVDMMDICKENGAYDAKHFLCYYYYGGMIYTGLKNFERALYFYEQAITTPAMAVSHIMLESYKKYILVSLILLGKVQQLPKYTSQIVGRFIKPLSNAYHELAQVYSTNNPSELRNLVSKHSETFTRDNNMGLVKQCLSSLYKKNIQRLTKTFLTLSLQDMASRVQLSGPQEAEKYVLHMIEDGEIFASINQKDGMVSFHDNPEKYNNPAMLHNIDQEMLKCIELDERLKAMDQEITVNPQFVQKSMGSQEDDSGNKPSSYS.

Ala2 carries the N-acetylalanine modification. Residues 197–365 form the PCI domain; it reads NFERALYFYE…GMVSFHDNPE (169 aa). A disordered region spans residues 402 to 423; it reads QFVQKSMGSQEDDSGNKPSSYS. Residues Ser407, Ser410, and Ser423 each carry the phosphoserine modification.

It belongs to the CSN3 family. Component of the CSN complex, composed of COPS1/GPS1, COPS2, COPS3, COPS4, COPS5, COPS6, COPS7 (COPS7A or COPS7B), COPS8 and COPS9. In the complex, it probably interacts directly with COPS1, COPS4, COPS8 and COPS9. Interacts with CK2 and PKD. Interacts with the translation initiation factor EIF3S6 and IKBKG. Interacts with ERCC6. Widely expressed.

It localises to the cytoplasm. The protein resides in the nucleus. Functionally, component of the COP9 signalosome complex (CSN), a complex involved in various cellular and developmental processes. The CSN complex is an essential regulator of the ubiquitin (Ubl) conjugation pathway by mediating the deneddylation of the cullin subunits of SCF-type E3 ligase complexes, leading to decrease the Ubl ligase activity of SCF-type complexes such as SCF, CSA or DDB2. The complex is also involved in phosphorylation of p53/TP53, c-jun/JUN, IkappaBalpha/NFKBIA, ITPK1 and IRF8/ICSBP, possibly via its association with CK2 and PKD kinases. CSN-dependent phosphorylation of TP53 and JUN promotes and protects degradation by the Ubl system, respectively. Essential to maintain the survival of epiblast cells and thus the development of the postimplantation embryo. This is COP9 signalosome complex subunit 3 (Cops3) from Mus musculus (Mouse).